The sequence spans 174 residues: UPF0113 protein APE_0516.1 (174 aa).

The protein belongs to the UPF0113 family.

The sequence is that of UPF0113 protein APE_0516.1 from Aeropyrum pernix (strain ATCC 700893 / DSM 11879 / JCM 9820 / NBRC 100138 / K1).